A 755-amino-acid polypeptide reads, in one-letter code: Exocyst complex component 3 (755 aa).

At K38 the chain carries N6-acetyllysine.

This sequence belongs to the SEC6 family. The exocyst complex is composed of EXOC1, EXOC2, EXOC3, EXOC4, EXOC5, EXOC6, EXOC7 and EXOC8. Interacts with EXOC3L1. Interacts with BIRC6/bruce. Interacts with MYRIP. Interacts with SLC6A9.

The protein resides in the cytoplasm. The protein localises to the perinuclear region. It is found in the cell projection. It localises to the growth cone. Its subcellular location is the midbody. The protein resides in the golgi apparatus. The protein localises to the neuron projection. In terms of biological role, component of the exocyst complex involved in the docking of exocytic vesicles with fusion sites on the plasma membrane. This Mus musculus (Mouse) protein is Exocyst complex component 3 (Exoc3).